The sequence spans 338 residues: RNA 3'-terminal phosphate cyclase (338 aa).

ATP contacts are provided by residues glutamine 103 and tyrosine 283–glutamine 287. Residue histidine 308 is the Tele-AMP-histidine intermediate of the active site.

The protein belongs to the RNA 3'-terminal cyclase family. Type 1 subfamily.

The protein resides in the cytoplasm. The enzyme catalyses a 3'-end 3'-phospho-ribonucleotide-RNA + ATP = a 3'-end 2',3'-cyclophospho-ribonucleotide-RNA + AMP + diphosphate. Catalyzes the conversion of 3'-phosphate to a 2',3'-cyclic phosphodiester at the end of RNA. The mechanism of action of the enzyme occurs in 3 steps: (A) adenylation of the enzyme by ATP; (B) transfer of adenylate to an RNA-N3'P to produce RNA-N3'PP5'A; (C) and attack of the adjacent 2'-hydroxyl on the 3'-phosphorus in the diester linkage to produce the cyclic end product. The biological role of this enzyme is unknown but it is likely to function in some aspects of cellular RNA processing. The chain is RNA 3'-terminal phosphate cyclase from Escherichia coli O6:K15:H31 (strain 536 / UPEC).